Consider the following 277-residue polypeptide: GPALPP motifs-containing protein 1 (277 aa).

The interval 1–240 (MARDLIGPAL…VWTDTPADRE (240 aa)) is disordered. The residue at position 2 (Ala-2) is an N-acetylalanine. The short motif at 7–12 (GPALPP) is the GPALPP motif 1 element. Ser-28 carries the phosphoserine modification. A GPALPP motif 2 motif is present at residues 32–37 (GPALPP). 2 stretches are compositionally biased toward acidic residues: residues 60-69 (GNQESEEDDT) and 81-90 (DDDDDDDDEG). The GPALPP motif 3 motif lies at 93–98 (GPALPP). Residue Ser-106 is modified to Phosphoserine. Over residues 108-117 (PRPMIGPALP) the composition is skewed to pro residues. A GPALPP motif 4 motif is present at residues 113-118 (GPALPP). 2 positions are modified to phosphoserine: Ser-138 and Ser-143. Phosphothreonine is present on Thr-147. Ser-149 and Ser-150 each carry phosphoserine. Basic and acidic residues predominate over residues 172 to 196 (EFEKRAQRMKEKLTKGDDDSSKPIT).

The protein is GPALPP motifs-containing protein 1 (GPALPP1) of Bos taurus (Bovine).